The chain runs to 376 residues: Serpin B9 (376 aa).

N-acetylmethionine is present on Met-1.

This sequence belongs to the serpin family. Ov-serpin subfamily.

It is found in the cytoplasm. Granzyme B inhibitor. In Homo sapiens (Human), this protein is Serpin B9 (SERPINB9).